A 165-amino-acid polypeptide reads, in one-letter code: Small ribosomal subunit protein uS5 (165 aa).

Positions 10 to 73 constitute an S5 DRBM domain; sequence LKEKVVHINR…EDAKKNIVEV (64 aa).

It belongs to the universal ribosomal protein uS5 family. In terms of assembly, part of the 30S ribosomal subunit. Contacts proteins S4 and S8.

With S4 and S12 plays an important role in translational accuracy. Functionally, located at the back of the 30S subunit body where it stabilizes the conformation of the head with respect to the body. In Clostridium botulinum (strain ATCC 19397 / Type A), this protein is Small ribosomal subunit protein uS5.